A 261-amino-acid chain; its full sequence is Transcription factor BEE 3 (261 aa).

Positions 72 to 82 (NIQNNEESSSQ) are enriched in low complexity. Disordered regions lie at residues 72 to 158 (NIQN…TDSH) and 242 to 261 (VEMGQGRDGSSVFHSSSWTL). Residues 95-123 (VSTSENSVSDQTLSTSSAQVSINGNISTK) show a composition bias toward polar residues. Positions 135–146 (NREEEKEREVVH) are enriched in basic and acidic residues. A bHLH domain is found at 153–203 (QATDSHSIAERVRRGKINERLKCLQDIVPGCYKTMGMATMLDEIINYVQSL).

As to quaternary structure, homodimer. Expressed in stems.

It is found in the nucleus. In terms of biological role, positive regulator of brassinosteroid signaling. The polypeptide is Transcription factor BEE 3 (BEE3) (Arabidopsis thaliana (Mouse-ear cress)).